A 182-amino-acid chain; its full sequence is Peptide methionine sulfoxide reductase MsrA (182 aa).

The active site involves Cys-13.

It belongs to the MsrA Met sulfoxide reductase family.

The catalysed reaction is L-methionyl-[protein] + [thioredoxin]-disulfide + H2O = L-methionyl-(S)-S-oxide-[protein] + [thioredoxin]-dithiol. It catalyses the reaction [thioredoxin]-disulfide + L-methionine + H2O = L-methionine (S)-S-oxide + [thioredoxin]-dithiol. Has an important function as a repair enzyme for proteins that have been inactivated by oxidation. Catalyzes the reversible oxidation-reduction of methionine sulfoxide in proteins to methionine. This is Peptide methionine sulfoxide reductase MsrA from Mycobacterium bovis (strain ATCC BAA-935 / AF2122/97).